A 541-amino-acid chain; its full sequence is Membrane protein insertase YidC (541 aa).

6 helical membrane passes run 6–26 (NILL…WQAD), 325–345 (LVVD…LLMF), 349–369 (FVGN…GLLF), 420–440 (GGCL…WVLL), 457–477 (LSVQ…MFIM), and 500–520 (VIFT…WLVG).

Belongs to the OXA1/ALB3/YidC family. Type 1 subfamily. As to quaternary structure, interacts with the Sec translocase complex via SecD. Specifically interacts with transmembrane segments of nascent integral membrane proteins during membrane integration.

The protein resides in the cell inner membrane. Its function is as follows. Required for the insertion and/or proper folding and/or complex formation of integral membrane proteins into the membrane. Involved in integration of membrane proteins that insert both dependently and independently of the Sec translocase complex, as well as at least some lipoproteins. Aids folding of multispanning membrane proteins. This is Membrane protein insertase YidC from Shewanella sp. (strain W3-18-1).